The sequence spans 179 residues: Probable mitochondrial import inner membrane translocase subunit Tim17 1 (179 aa).

The next 3 membrane-spanning stretches (helical) occupy residues 17–37, 61–81, and 113–133; these read CGGA…IKGF, LVGG…CSLV, and LSSA…GIVV.

The protein belongs to the Tim17/Tim22/Tim23 family. In terms of assembly, component of the TIM23 complex at least composed of Tim23, Tim17 (Tim17a1, Tim17a2 or Tim17b1) and a Tim50. The complex interacts with the Tim44 component of the PAM complex.

It is found in the mitochondrion inner membrane. Its function is as follows. Essential component of the TIM23 complex, a complex that mediates the translocation of transit peptide-containing proteins across the mitochondrial inner membrane. The sequence is that of Probable mitochondrial import inner membrane translocase subunit Tim17 1 (Tim17b1) from Drosophila melanogaster (Fruit fly).